A 210-amino-acid chain; its full sequence is Germin-like protein subfamily 3 member 4 (210 aa).

The N-terminal stretch at 1–18 (MKFFVVIVFCAIFLSVSG) is a signal peptide. The cysteines at positions 27 and 44 are disulfide-linked. Positions 58 to 190 (TKLTEAGDTD…VFGIDQEHIK (133 aa)) constitute a Cupin type-1 domain. A glycan (N-linked (GlcNAc...) asparagine) is linked at Asn73. His106, His108, Glu113, and His152 together coordinate Mn(2+).

Belongs to the germin family. In terms of assembly, oligomer (believed to be a pentamer but probably hexamer).

The protein resides in the secreted. It is found in the extracellular space. The protein localises to the apoplast. Its function is as follows. May play a role in plant defense. Probably has no oxalate oxidase activity even if the active site is conserved. This chain is Germin-like protein subfamily 3 member 4, found in Arabidopsis thaliana (Mouse-ear cress).